We begin with the raw amino-acid sequence, 374 residues long: Glutamate 5-kinase (374 aa).

Lys-17 is a binding site for ATP. Ser-57, Asp-144, and Asn-156 together coordinate substrate. ATP is bound by residues 176–177 (SD) and 218–224 (TGGMVTK). Positions 280-358 (QGALVLDDGA…RELARELGPA (79 aa)) constitute a PUA domain.

Belongs to the glutamate 5-kinase family.

The protein localises to the cytoplasm. It carries out the reaction L-glutamate + ATP = L-glutamyl 5-phosphate + ADP. It functions in the pathway amino-acid biosynthesis; L-proline biosynthesis; L-glutamate 5-semialdehyde from L-glutamate: step 1/2. Its function is as follows. Catalyzes the transfer of a phosphate group to glutamate to form L-glutamate 5-phosphate. The polypeptide is Glutamate 5-kinase (Streptomyces coelicolor (strain ATCC BAA-471 / A3(2) / M145)).